Consider the following 95-residue polypeptide: Aspartyl/glutamyl-tRNA(Asn/Gln) amidotransferase subunit C (95 aa).

The protein belongs to the GatC family. In terms of assembly, heterotrimer of A, B and C subunits.

It carries out the reaction L-glutamyl-tRNA(Gln) + L-glutamine + ATP + H2O = L-glutaminyl-tRNA(Gln) + L-glutamate + ADP + phosphate + H(+). The catalysed reaction is L-aspartyl-tRNA(Asn) + L-glutamine + ATP + H2O = L-asparaginyl-tRNA(Asn) + L-glutamate + ADP + phosphate + 2 H(+). In terms of biological role, allows the formation of correctly charged Asn-tRNA(Asn) or Gln-tRNA(Gln) through the transamidation of misacylated Asp-tRNA(Asn) or Glu-tRNA(Gln) in organisms which lack either or both of asparaginyl-tRNA or glutaminyl-tRNA synthetases. The reaction takes place in the presence of glutamine and ATP through an activated phospho-Asp-tRNA(Asn) or phospho-Glu-tRNA(Gln). This chain is Aspartyl/glutamyl-tRNA(Asn/Gln) amidotransferase subunit C, found in Shouchella clausii (strain KSM-K16) (Alkalihalobacillus clausii).